Consider the following 320-residue polypeptide: Cytochrome f (320 aa).

An N-terminal signal peptide occupies residues 1-35; the sequence is MQNRNFNNLIIKWAIRLISIMIIINTIFWSSISEA. Heme is bound by residues Phe36, Cys56, Cys59, and His60. A helical transmembrane segment spans residues 286-305; sequence IQGLLLFFGSVILAQIFLVL.

Belongs to the cytochrome f family. As to quaternary structure, the 4 large subunits of the cytochrome b6-f complex are cytochrome b6, subunit IV (17 kDa polypeptide, petD), cytochrome f and the Rieske protein, while the 4 small subunits are PetG, PetL, PetM and PetN. The complex functions as a dimer. Requires heme as cofactor.

It localises to the plastid. The protein localises to the chloroplast thylakoid membrane. Functionally, component of the cytochrome b6-f complex, which mediates electron transfer between photosystem II (PSII) and photosystem I (PSI), cyclic electron flow around PSI, and state transitions. The polypeptide is Cytochrome f (petA) (Marchantia polymorpha (Common liverwort)).